A 176-amino-acid chain; its full sequence is Ferredoxin-type protein NapF (176 aa).

2 consecutive 4Fe-4S ferredoxin-type domains span residues 39 to 68 (VENS…KGDA) and 71 to 100 (PEVR…PRDQ). Residues Cys48, Cys51, Cys54, Cys58, Cys80, Cys83, Cys86, Cys90, Cys113, Cys121, Cys124, Cys128, Cys152, Cys155, Cys158, and Cys162 each contribute to the [4Fe-4S] cluster site. 2 4Fe-4S ferredoxin-type domains span residues 119–138 (IECR…FKLQ) and 143–172 (AQPL…MNDL).

This sequence belongs to the NapF family. As to quaternary structure, interacts with the cytoplasmic NapA precursor. [4Fe-4S] cluster serves as cofactor.

Its subcellular location is the cytoplasm. Could be involved in the maturation of NapA, the catalytic subunit of the periplasmic nitrate reductase, before its export into the periplasm. The chain is Ferredoxin-type protein NapF from Haemophilus influenzae (strain ATCC 51907 / DSM 11121 / KW20 / Rd).